We begin with the raw amino-acid sequence, 322 residues long: Ferredoxin--NADP reductase (322 aa).

Positions 87, 119, 279, and 320 each coordinate FAD.

The protein belongs to the ferredoxin--NADP reductase type 2 family. As to quaternary structure, homodimer. Requires FAD as cofactor.

It catalyses the reaction 2 reduced [2Fe-2S]-[ferredoxin] + NADP(+) + H(+) = 2 oxidized [2Fe-2S]-[ferredoxin] + NADPH. This chain is Ferredoxin--NADP reductase, found in Streptococcus suis (strain 98HAH33).